Consider the following 84-residue polypeptide: Esculentin-1ISb (84 aa).

The N-terminal stretch at 1 to 22 is a signal peptide; sequence MFTLKKPLLLIVLLGIISLSLC. Residues 23 to 36 constitute a propeptide, removed in mature form; the sequence is EQERAADEDEGTKI. Residues cysteine 78 and cysteine 84 are joined by a disulfide bond.

Expressed by the skin glands.

It is found in the secreted. Its function is as follows. Has antimicrobial activity against Gram-negative bacterium E.coli ATCC 8739 (MIC=3.1 ug), against Gram positive bacteria S.aureus ATCC 6538 (MIC=3.1 ug), methicillin-resistant S.aureus ATCC 43300 (MIC=12.5 ug), B.subtilis ATCC 6633 (MIC=12.5 ug) and against fungus C.albicans ATCC 90028 (MIC=50 ug). The chain is Esculentin-1ISb from Odorrana ishikawae (Ishikawa's frog).